A 142-amino-acid chain; its full sequence is Large ribosomal subunit protein uL11 (142 aa).

Belongs to the universal ribosomal protein uL11 family. As to quaternary structure, part of the ribosomal stalk of the 50S ribosomal subunit. Interacts with L10 and the large rRNA to form the base of the stalk. L10 forms an elongated spine to which L12 dimers bind in a sequential fashion forming a multimeric L10(L12)X complex. One or more lysine residues are methylated.

Forms part of the ribosomal stalk which helps the ribosome interact with GTP-bound translation factors. The chain is Large ribosomal subunit protein uL11 from Vibrio campbellii (strain ATCC BAA-1116).